The chain runs to 440 residues: Protein FPV117 (440 aa).

The protein belongs to the poxviruses G5 family.

The sequence is that of Protein FPV117 from Fowlpox virus (strain NVSL) (FPV).